A 936-amino-acid chain; its full sequence is Protein NLP2 (936 aa).

The interval 99–130 (IMSVNPTEAEKTGKSSGELGSDDGAHQGSSMV) is disordered. In terms of domain architecture, RWP-RK spans 550-635 (QPSSIGHAEK…INSVHGVDRS (86 aa)). Disordered stretches follow at residues 666-697 (PSVGKTVEENSDLKSEEGCSLPDGSQRQSCQL), 753-782 (CTNPSSSLRPSSESTRNQIVGRNSPSIQQE), and 794-827 (DKDHMHPSTSGMTDSSSGSASSHPTFKQNTRSAL). Basic and acidic residues predominate over residues 671–682 (TVEENSDLKSEE). Residues 688–697 (DGSQRQSCQL) are compositionally biased toward polar residues. A compositionally biased stretch (low complexity) spans 754-769 (TNPSSSLRPSSESTRN). Over residues 770–781 (QIVGRNSPSIQQ) the composition is skewed to polar residues. Low complexity predominate over residues 801–815 (STSGMTDSSSGSASS). Over residues 816–825 (HPTFKQNTRS) the composition is skewed to polar residues. The PB1 domain occupies 834 to 916 (ALTVKATYNG…RIVKLQVRDL (83 aa)).

The protein resides in the nucleus. Probable transcription factor. This chain is Protein NLP2, found in Oryza sativa subsp. japonica (Rice).